A 490-amino-acid chain; its full sequence is MAAAGDRGGREAACGHDSYRSPLASRYASPEMCFLFSDKYKFRTWRQLWLWLAEAEQTLGLPITDEQIQEMKSNLDNIDFRMAAEEEKQLRHDVMAHVHTFAHCCPKAASIIHLGATSCYVGDNTDLIILRNAFDLLLPKLARVISRLADFAKEQADLPTLGFTHFQPAQLTTVGKRCCLWIQDLCMDLQNLKRVRDELRFRGVKGTTGTQASFLQLFEGDDQKVEQLDKMVTEKAGFKRAFIITGQTYTRKVDIEVLSVLASLGASVHKICTDIRLLANLKEMEEPFEKQQIGSSAMPYKRNPMRSERCCSLARHLMALVMDPLQTASVQWFERTLDDSANRRICLAEAFLTADTVLNTLQNISEGLVVYPKVIERRVQQELPFMATENIIMAMVKAGGNRQDCREKIRVLSQQAAAVVKQEGGDNDLIERIQADAYFSPIHSQLDHLLDPSSFTGRASQQVQRFLEEEVCPLLKPYESVMKVKAELRL.

Ala-2 carries the post-translational modification N-acetylalanine. Residues 26–27, 91–93, and 117–118 each bind substrate; these read RY, RHD, and TS. Lys-153 carries the N6-acetyllysine modification. His-165 serves as the catalytic Proton donor/acceptor. Residue Gln-247 participates in substrate binding. Ser-295 (proton donor/acceptor) is an active-site residue. The residue at position 301 (Lys-301) is an N6-acetyllysine. Positions 309, 335, 340, and 344 each coordinate substrate. Lys-421 is covalently cross-linked (Glycyl lysine isopeptide (Lys-Gly) (interchain with G-Cter in SUMO1)).

It belongs to the lyase 1 family. Adenylosuccinate lyase subfamily. As to quaternary structure, homotetramer. Residues from neighboring subunits contribute catalytic and substrate-binding residues to each active site.

The catalysed reaction is N(6)-(1,2-dicarboxyethyl)-AMP = fumarate + AMP. It catalyses the reaction (2S)-2-[5-amino-1-(5-phospho-beta-D-ribosyl)imidazole-4-carboxamido]succinate = 5-amino-1-(5-phospho-beta-D-ribosyl)imidazole-4-carboxamide + fumarate. It functions in the pathway purine metabolism; AMP biosynthesis via de novo pathway; AMP from IMP: step 2/2. It participates in purine metabolism; IMP biosynthesis via de novo pathway; 5-amino-1-(5-phospho-D-ribosyl)imidazole-4-carboxamide from 5-amino-1-(5-phospho-D-ribosyl)imidazole-4-carboxylate: step 2/2. In terms of biological role, catalyzes two non-sequential steps in de novo AMP synthesis: converts (S)-2-(5-amino-1-(5-phospho-D-ribosyl)imidazole-4-carboxamido)succinate (SAICAR) to fumarate plus 5-amino-1-(5-phospho-D-ribosyl)imidazole-4-carboxamide, and thereby also contributes to de novo IMP synthesis, and converts succinyladenosine monophosphate (SAMP) to AMP and fumarate. The polypeptide is Adenylosuccinate lyase (ADSL) (Bos taurus (Bovine)).